We begin with the raw amino-acid sequence, 247 residues long: Exosome complex component Rrp4 (247 aa).

Residues 70–143 form the S1 motif domain; that stretch reads GDTVIGLIED…INPILSIKGK (74 aa). A KH domain is found at 149–211; it reads SSGIVIDIPP…EALVEAIQII (63 aa).

The protein belongs to the RRP4 family. As to quaternary structure, component of the archaeal exosome complex. Forms a trimer of Rrp4 and/or Csl4 subunits. The trimer associates with a hexameric ring-like arrangement composed of 3 Rrp41-Rrp42 heterodimers.

It is found in the cytoplasm. Its function is as follows. Non-catalytic component of the exosome, which is a complex involved in RNA degradation. Increases the RNA binding and the efficiency of RNA degradation. Confers strong poly(A) specificity to the exosome. The protein is Exosome complex component Rrp4 of Sulfurisphaera tokodaii (strain DSM 16993 / JCM 10545 / NBRC 100140 / 7) (Sulfolobus tokodaii).